The following is a 362-amino-acid chain: Endolytic peptidoglycan transglycosylase RlpA (362 aa).

Residues 1-17 form the signal peptide; it reads MRKQWLGICIAAGMLAA. Cys-18 carries the N-palmitoyl cysteine lipid modification. Cys-18 carries the S-diacylglycerol cysteine lipid modification. A disordered region spans residues 198 to 276; it reads PDLSGGAGTS…PSTTPATSPA (79 aa). Residues 262–276 are compositionally biased toward low complexity; sequence PVVTAPSTTPATSPA. Positions 285 to 361 constitute an SPOR domain; sequence QSASGNFMVQ…AQLQSFITTA (77 aa).

It belongs to the RlpA family.

The protein localises to the cell membrane. Its function is as follows. Lytic transglycosylase with a strong preference for naked glycan strands that lack stem peptides. This Escherichia coli (strain K12) protein is Endolytic peptidoglycan transglycosylase RlpA.